A 66-amino-acid polypeptide reads, in one-letter code: Large ribosomal subunit protein uL29 (66 aa).

Belongs to the universal ribosomal protein uL29 family.

In Ruegeria sp. (strain TM1040) (Silicibacter sp.), this protein is Large ribosomal subunit protein uL29.